We begin with the raw amino-acid sequence, 206 residues long: LexA repressor (206 aa).

Positions 28 to 48 (VREIGEAVGLASSSTVHGHLS) form a DNA-binding region, H-T-H motif. Residues Ser129 and Lys167 each act as for autocatalytic cleavage activity in the active site.

The protein belongs to the peptidase S24 family. Homodimer.

The catalysed reaction is Hydrolysis of Ala-|-Gly bond in repressor LexA.. In terms of biological role, represses a number of genes involved in the response to DNA damage (SOS response), including recA and lexA. In the presence of single-stranded DNA, RecA interacts with LexA causing an autocatalytic cleavage which disrupts the DNA-binding part of LexA, leading to derepression of the SOS regulon and eventually DNA repair. The chain is LexA repressor from Staphylococcus epidermidis (strain ATCC 35984 / DSM 28319 / BCRC 17069 / CCUG 31568 / BM 3577 / RP62A).